The sequence spans 616 residues: ATP-dependent RNA helicase VAD1 (616 aa).

Residues 1-35 (MASSSTLANDDWKQGLAAPPKDLRPQTEDVTATQG) form a disordered region. Positions 36 to 64 (SRFEDFGLRRELLMGIYTAGFERPSPIQE) match the Q motif motif. Residues 67–238 (IPMALTGRDI…DQHMVQPYEI (172 aa)) form the Helicase ATP-binding domain. Residue 80 to 87 (AKNGTGKT) coordinates ATP. The short motif at 186–189 (DEAD) is the DEAD box element. Residues 248 to 408 (GVTQYYAYVE…PIPAVIDPVL (161 aa)) form the Helicase C-terminal domain. Residues 416–616 (EEERESPPPK…GASQSQQAQA (201 aa)) form a disordered region. 3 stretches are compositionally biased toward low complexity: residues 427-441 (AAIA…PQQR), 458-500 (PAAA…NSSP), and 508-523 (YPQQ…AQMQ). Positions 529–545 (PATQPQASAQIPVQGQT) are enriched in polar residues. 2 stretches are compositionally biased toward low complexity: residues 550–579 (PRAQ…PNTG) and 606–616 (AGASQSQQAQA).

It belongs to the DEAD box helicase family. DDX6/DHH1 subfamily.

Its subcellular location is the cytoplasm. It localises to the P-body. It catalyses the reaction ATP + H2O = ADP + phosphate + H(+). Functionally, ATP-dependent RNA helicase involved in mRNA turnover, and more specifically in mRNA decapping. Is involved in G1/S DNA-damage checkpoint recovery, probably through the regulation of the translational status of a subset of mRNAs. May also have a role in translation and mRNA nuclear export. Blocks autophagy in nutrient-rich conditions by, at least partly, binding and repressing the expression of a set of ATG genes, including ATG3, ATG7, ATG8, ATG19, ATG20 and ATG22. VAD1-mediated repression of autophagy is regulated by TOR-dependent phosphorylation of the decapping enzyme DCP2. Regulates multiple virulence-associated genes. Repression of autophagy by VAD1 also regulates the pathogenesis. This chain is ATP-dependent RNA helicase VAD1, found in Cryptococcus neoformans var. grubii serotype A (strain H99 / ATCC 208821 / CBS 10515 / FGSC 9487) (Filobasidiella neoformans var. grubii).